We begin with the raw amino-acid sequence, 288 residues long: MAGAKEIRTKIGSVKSTQKITKAMEMVAASKMRRSQDAMESSRPYAQTIRKVIGHVANASLEYRHPYLEEREAKRVGYIIISTDRGLCGGLNINLFKKAITDMQTWKEKGAQIELAIIGSKATAFFNNSGAKVAAQVSGLGDSPSLEDLIGSVGVMLKKYDKGELDRLYLVFNQFVNTMVQKPKIDQLLPLPKSDSEDMQRDHMWDYIYEPEPKPLLDALLLRFIESQVYQGVVENLACEQAARMVAMKAATDNASNLIDDLQLVYNKARQAAITQELSEIVGGAAAV.

It belongs to the ATPase gamma chain family. As to quaternary structure, F-type ATPases have 2 components, CF(1) - the catalytic core - and CF(0) - the membrane proton channel. CF(1) has five subunits: alpha(3), beta(3), gamma(1), delta(1), epsilon(1). CF(0) has three main subunits: a, b and c.

It is found in the cell inner membrane. Its function is as follows. Produces ATP from ADP in the presence of a proton gradient across the membrane. The gamma chain is believed to be important in regulating ATPase activity and the flow of protons through the CF(0) complex. The polypeptide is ATP synthase gamma chain (Vibrio cholerae serotype O1 (strain ATCC 39541 / Classical Ogawa 395 / O395)).